A 130-amino-acid chain; its full sequence is Ribonuclease P protein component 2 (130 aa).

The protein belongs to the eukaryotic/archaeal RNase P protein component 2 family. Consists of a catalytic RNA component and at least 4-5 protein subunits.

The protein resides in the cytoplasm. It catalyses the reaction Endonucleolytic cleavage of RNA, removing 5'-extranucleotides from tRNA precursor.. Functionally, part of ribonuclease P, a protein complex that generates mature tRNA molecules by cleaving their 5'-ends. In Methanococcus maripaludis (strain C6 / ATCC BAA-1332), this protein is Ribonuclease P protein component 2.